Consider the following 386-residue polypeptide: O-phospho-L-seryl-tRNA:Cys-tRNA synthase (386 aa).

Pyridoxal 5'-phosphate-binding positions include 89 to 90 (AR), N196, and 219 to 221 (SGH). An N6-(pyridoxal phosphate)lysine modification is found at K222.

It belongs to the SepCysS family. Homodimer. Interacts with SepRS. Requires pyridoxal 5'-phosphate as cofactor.

It catalyses the reaction O-phospho-L-seryl-tRNA(Cys) + hydrogen sulfide + H(+) = L-cysteinyl-tRNA(Cys) + phosphate. Converts O-phospho-L-seryl-tRNA(Cys) (Sep-tRNA(Cys)) to L-cysteinyl-tRNA(Cys) (Cys-tRNA(Cys)). The polypeptide is O-phospho-L-seryl-tRNA:Cys-tRNA synthase (Methanosarcina mazei (strain ATCC BAA-159 / DSM 3647 / Goe1 / Go1 / JCM 11833 / OCM 88) (Methanosarcina frisia)).